Here is a 671-residue protein sequence, read N- to C-terminus: MSKSFKLHSVFKPAGDQPEAIRKLEEGLENGLAHQTLLGVTGSGKTFTVANVIADLNRPTMILAPNKTLAAQLYGEMKEFFPDNAVEYFVSYYDYYQPEAYVPSSDTFIEKDASVNEHIEQMRLSATKALLERRDVVVVASVSAIYGLGDPDLYLKMMLHLTRGMIIDQRSILRRLSELQYSRNDQVFQRGTFRVRGEVIDIFPAESDEWALRVELFDEEVERLSIFDPLTGQLQHEVPRFTVYPKTHYVTPRERILQAMEEIKVELAERRQVLLANNKLLEEQRLSQRTQFDLEMMNELGYCSGIENYSRYLSGRGPGEAPPTLFDYLPADGLLIVDESHVTIPQIGGMYKGDRSRKETLVEYGFRLPSALDNRPMRFEEFEALAPQTIYVSATPGKYELEKSGGDIIEQVVRPTGLLDPLIEVRPVATQVDDLLSEIRIRAAINERVLVTTLTKRMAEDLTDYLSEHGAKVRYLHSDIDTVERVEIIRDLRLGEFDVLVGINLLREGLDMPEVSLVAILDADKEGFLRSERSLIQTIGRAARNLNGKAILYGDRITASMEKAIGETERRRAKQQAYNEERGIIPQGLNKKIGDILQLGQPSMRGKGKGRGSHKMADTTQYQSLSPKALDQKIRELEAKMYTYAQNLEFEQAAELRDQVHQLRQQFIAIS.

Residues 26–183 (EGLENGLAHQ…RRLSELQYSR (158 aa)) form the Helicase ATP-binding domain. An ATP-binding site is contributed by 39 to 46 (GVTGSGKT). Positions 92–115 (YYDYYQPEAYVPSSDTFIEKDASV) match the Beta-hairpin motif. The region spanning 431–597 (QVDDLLSEIR…GLNKKIGDIL (167 aa)) is the Helicase C-terminal domain. A UVR domain is found at 631 to 666 (DQKIRELEAKMYTYAQNLEFEQAAELRDQVHQLRQQ).

This sequence belongs to the UvrB family. Forms a heterotetramer with UvrA during the search for lesions. Interacts with UvrC in an incision complex.

It is found in the cytoplasm. Its function is as follows. The UvrABC repair system catalyzes the recognition and processing of DNA lesions. A damage recognition complex composed of 2 UvrA and 2 UvrB subunits scans DNA for abnormalities. Upon binding of the UvrA(2)B(2) complex to a putative damaged site, the DNA wraps around one UvrB monomer. DNA wrap is dependent on ATP binding by UvrB and probably causes local melting of the DNA helix, facilitating insertion of UvrB beta-hairpin between the DNA strands. Then UvrB probes one DNA strand for the presence of a lesion. If a lesion is found the UvrA subunits dissociate and the UvrB-DNA preincision complex is formed. This complex is subsequently bound by UvrC and the second UvrB is released. If no lesion is found, the DNA wraps around the other UvrB subunit that will check the other stand for damage. This is UvrABC system protein B from Yersinia pseudotuberculosis serotype IB (strain PB1/+).